We begin with the raw amino-acid sequence, 277 residues long: MDNAVDRHVFYISDGTAITAEVLGHAVMSQFPVTISSITLPFVENESRARAVKDQIDAIYHQTGVRPLVFYSIVLPEIRAIILQSEGFCQDIVQALVAPLQQEMKLDPTPIAHRTHGLNPNNLNKYDARIAAIDYTLAHDDGISLRNLDQAQVILLGVSRCGKTPTSLYLAMQFGIRAANYPFIADDMDNLVLPASLKPLQHKLFGLTIDPERLAAIREERRENSRYASLRQCRMEVAEVEALYRKNQIPWINSTNYSVEEIATKILDIMGLSRRMY.

157–164 (GVSRCGKT) lines the ADP pocket.

It belongs to the pyruvate, phosphate/water dikinase regulatory protein family. PSRP subfamily.

It carries out the reaction [pyruvate, water dikinase] + ADP = [pyruvate, water dikinase]-phosphate + AMP + H(+). It catalyses the reaction [pyruvate, water dikinase]-phosphate + phosphate + H(+) = [pyruvate, water dikinase] + diphosphate. Its function is as follows. Bifunctional serine/threonine kinase and phosphorylase involved in the regulation of the phosphoenolpyruvate synthase (PEPS) by catalyzing its phosphorylation/dephosphorylation. The protein is Phosphoenolpyruvate synthase regulatory protein of Escherichia coli O1:K1 / APEC.